The chain runs to 411 residues: Tyrosine--tRNA ligase (411 aa).

Y36 lines the L-tyrosine pocket. The 'HIGH' region signature appears at 41-50 (PTADSLHVGH). Residues Y172 and Q176 each contribute to the L-tyrosine site. Residues 232–236 (KMGKT) carry the 'KMSKS' region motif. K235 contacts ATP. The S4 RNA-binding domain occupies 344-409 (YSIANILVVT…GKKNHIKVII (66 aa)).

It belongs to the class-I aminoacyl-tRNA synthetase family. TyrS type 1 subfamily. Homodimer.

It is found in the cytoplasm. The catalysed reaction is tRNA(Tyr) + L-tyrosine + ATP = L-tyrosyl-tRNA(Tyr) + AMP + diphosphate + H(+). Catalyzes the attachment of tyrosine to tRNA(Tyr) in a two-step reaction: tyrosine is first activated by ATP to form Tyr-AMP and then transferred to the acceptor end of tRNA(Tyr). The chain is Tyrosine--tRNA ligase from Malacoplasma penetrans (strain HF-2) (Mycoplasma penetrans).